Here is a 429-residue protein sequence, read N- to C-terminus: 3-phosphoshikimate 1-carboxyvinyltransferase (429 aa).

The 3-phosphoshikimate site is built by Lys-21, Ser-22, and Arg-26. Lys-21 serves as a coordination point for phosphoenolpyruvate. Phosphoenolpyruvate-binding residues include Gly-94 and Arg-122. Residues Ser-167, Gln-169, Asp-315, and Lys-342 each coordinate 3-phosphoshikimate. A phosphoenolpyruvate-binding site is contributed by Gln-169. The active-site Proton acceptor is Asp-315. Positions 346 and 388 each coordinate phosphoenolpyruvate.

It belongs to the EPSP synthase family. As to quaternary structure, monomer.

It localises to the cytoplasm. It catalyses the reaction 3-phosphoshikimate + phosphoenolpyruvate = 5-O-(1-carboxyvinyl)-3-phosphoshikimate + phosphate. Its pathway is metabolic intermediate biosynthesis; chorismate biosynthesis; chorismate from D-erythrose 4-phosphate and phosphoenolpyruvate: step 6/7. Catalyzes the transfer of the enolpyruvyl moiety of phosphoenolpyruvate (PEP) to the 5-hydroxyl of shikimate-3-phosphate (S3P) to produce enolpyruvyl shikimate-3-phosphate and inorganic phosphate. The protein is 3-phosphoshikimate 1-carboxyvinyltransferase of Desulforudis audaxviator (strain MP104C).